A 146-amino-acid chain; its full sequence is UPF0260 protein VF_1660 (146 aa).

This sequence belongs to the UPF0260 family.

This Aliivibrio fischeri (strain ATCC 700601 / ES114) (Vibrio fischeri) protein is UPF0260 protein VF_1660.